An 81-amino-acid polypeptide reads, in one-letter code: MDPLVSAASVLAAALAVGLAAIGPGIGQGNAAGQAVEGIARQPEAEGKIRGTLLLSLAFMEALTIYGLVVALVLLFANPFA.

Transmembrane regions (helical) follow at residues 7–27 (AASVLAAALAVGLAAIGPGIG) and 57–77 (LAFMEALTIYGLVVALVLLFA).

This sequence belongs to the ATPase C chain family. F-type ATPases have 2 components, F(1) - the catalytic core - and F(0) - the membrane proton channel. F(1) has five subunits: alpha(3), beta(3), gamma(1), delta(1), epsilon(1). F(0) has four main subunits: a(1), b(1), b'(1) and c(10-14). The alpha and beta chains form an alternating ring which encloses part of the gamma chain. F(1) is attached to F(0) by a central stalk formed by the gamma and epsilon chains, while a peripheral stalk is formed by the delta, b and b' chains.

The protein resides in the cellular thylakoid membrane. F(1)F(0) ATP synthase produces ATP from ADP in the presence of a proton or sodium gradient. F-type ATPases consist of two structural domains, F(1) containing the extramembraneous catalytic core and F(0) containing the membrane proton channel, linked together by a central stalk and a peripheral stalk. During catalysis, ATP synthesis in the catalytic domain of F(1) is coupled via a rotary mechanism of the central stalk subunits to proton translocation. Functionally, key component of the F(0) channel; it plays a direct role in translocation across the membrane. A homomeric c-ring of between 10-14 subunits forms the central stalk rotor element with the F(1) delta and epsilon subunits. This is ATP synthase subunit c from Nostoc sp. (strain PCC 7120 / SAG 25.82 / UTEX 2576).